A 64-amino-acid chain; its full sequence is MPKNKTNSGAKKRFRVTGSGKIMHKRAHQTHKFEERSRSSVRRLSNDAEVSSADRKSIKKLLGK.

The segment at 1–64 is disordered; sequence MPKNKTNSGA…RKSIKKLLGK (64 aa).

It belongs to the bacterial ribosomal protein bL35 family.

This is Large ribosomal subunit protein bL35 from Beutenbergia cavernae (strain ATCC BAA-8 / DSM 12333 / CCUG 43141 / JCM 11478 / NBRC 16432 / NCIMB 13614 / HKI 0122).